We begin with the raw amino-acid sequence, 1044 residues long: R3H domain-containing protein 2 (1044 aa).

Disordered regions lie at residues 23–71 (EESV…AKSN) and 106–147 (SCPS…QEYT). Residues 36-56 (PSKEDVEKEGEENGLRQETQR) are compositionally biased toward basic and acidic residues. Ser-37 carries the post-translational modification Phosphoserine. Basic residues predominate over residues 58–71 (TSSHGHARKRAKSN). Over residues 109-143 (SDKEEEKSTKDVSEKEDKDKSKEKVPRKMLSRDSS) the composition is skewed to basic and acidic residues. Ser-143 is subject to Phosphoserine. Residues 169-232 (RMMLLKLEQE…AVIINKTSST (64 aa)) enclose the R3H domain. The region spanning 233–303 (RIPEQRFSEH…VRERIFARET (71 aa)) is the SUZ domain. Composition is skewed to basic and acidic residues over residues 261–270 (DASMDRDDNQ) and 277–288 (DGRRSKSIEERE). 7 disordered regions span residues 261-288 (DASMDRDDNQMRVPLQDGRRSKSIEERE), 320-408 (SSSS…LSRP), 433-485 (CTAQ…FSPS), 502-533 (MAEDLSNPFGQMSLSRQGSTEAADPSSALFQP), 551-600 (GQPL…SNQQ), 729-770 (GTSP…SPSG), and 807-848 (GQKP…SLSN). Positions 338–349 (SRTSSSRQSSTD) are enriched in low complexity. Phosphoserine is present on residues Ser-362, Ser-365, and Ser-381. The span at 433–449 (CTAQQQQQQQQQQQQLP) shows a compositional bias: low complexity. 2 stretches are compositionally biased toward polar residues: residues 509-521 (PFGQMSLSRQGST) and 554-572 (LPTSNYSTSSHAPPTQQVL). Low complexity predominate over residues 757 to 770 (PQMSQQYSGVSPSG). Over residues 818-848 (GSPQANAQMGSSPVTSPTQSPAPSPVTSLSN) the composition is skewed to polar residues. Residues Ser-921 and Ser-923 each carry the phosphoserine modification. 2 positions are modified to phosphothreonine: Thr-924 and Thr-928.

It is found in the nucleus. In Mus musculus (Mouse), this protein is R3H domain-containing protein 2 (R3hdm2).